The primary structure comprises 212 residues: Ribosomal RNA small subunit methyltransferase G (212 aa).

S-adenosyl-L-methionine is bound by residues Gly-80, Leu-85, 131–132 (AE), and Arg-146.

It belongs to the methyltransferase superfamily. RNA methyltransferase RsmG family.

The protein localises to the cytoplasm. The enzyme catalyses guanosine(527) in 16S rRNA + S-adenosyl-L-methionine = N(7)-methylguanosine(527) in 16S rRNA + S-adenosyl-L-homocysteine. Its function is as follows. Specifically methylates the N7 position of guanine in position 527 of 16S rRNA. In Xylella fastidiosa (strain 9a5c), this protein is Ribosomal RNA small subunit methyltransferase G.